Here is a 472-residue protein sequence, read N- to C-terminus: Chromosomal replication initiator protein DnaA (472 aa).

A domain I, interacts with DnaA modulators region spans residues 1-73 (MSNMEHDRWS…LTCWQAEMPE (73 aa)). A domain II region spans residues 73-128 (EVCRIDLTVRSPMRAAVTKEAPAPAEHRRDEHRPAADARSHAAAPAPSNHDALGGS). The tract at residues 89–127 (VTKEAPAPAEHRRDEHRPAADARSHAAAPAPSNHDALGG) is disordered. A compositionally biased stretch (basic and acidic residues) spans 97-112 (AEHRRDEHRPAADARS). Over residues 113 to 124 (HAAAPAPSNHDA) the composition is skewed to low complexity. A domain III, AAA+ region region spans residues 129 to 351 (PLDPRLTFAS…GAINRLLAHS (223 aa)). Gly-176, Gly-178, Lys-179, and Thr-180 together coordinate ATP. Residues 352 to 472 (KLNAQPVTLE…VESLKRQLQE (121 aa)) form a domain IV, binds dsDNA region.

The protein belongs to the DnaA family. As to quaternary structure, oligomerizes as a right-handed, spiral filament on DNA at oriC.

It is found in the cytoplasm. Plays an essential role in the initiation and regulation of chromosomal replication. ATP-DnaA binds to the origin of replication (oriC) to initiate formation of the DNA replication initiation complex once per cell cycle. Binds the DnaA box (a 9 base pair repeat at the origin) and separates the double-stranded (ds)DNA. Forms a right-handed helical filament on oriC DNA; dsDNA binds to the exterior of the filament while single-stranded (ss)DNA is stabiized in the filament's interior. The ATP-DnaA-oriC complex binds and stabilizes one strand of the AT-rich DNA unwinding element (DUE), permitting loading of DNA polymerase. After initiation quickly degrades to an ADP-DnaA complex that is not apt for DNA replication. Binds acidic phospholipids. The protein is Chromosomal replication initiator protein DnaA of Rhodopseudomonas palustris (strain BisB5).